The sequence spans 107 residues: High mobility group protein HMG-I/HMG-Y (107 aa).

A compositionally biased stretch (polar residues) spans 1–13 (MSESGSKSSQPLA). Positions 1–107 (MSESGSKSSQ…ISQESSEEEQ (107 aa)) are disordered. The residue at position 2 (S2) is an N-acetylserine. At K7 the chain carries N6-acetyllysine. At S8 the chain carries ADP-ribosylserine. S9 is subject to ADP-ribosylserine; alternate. Residue S9 is modified to Phosphoserine; alternate. The residue at position 15 (K15) is an N6-acetyllysine; alternate. Residue K15 forms a Glycyl lysine isopeptide (Lys-Gly) (interchain with G-Cter in SUMO2); alternate linkage. A compositionally biased stretch (basic and acidic residues) spans 15–24 (KQEKDGTEKR). The a.T hook 1 DNA-binding region spans 21-31 (TEKRGRGRPRK). R26 is modified (asymmetric dimethylarginine; alternate). The residue at position 26 (R26) is an Omega-N-methylarginine; alternate. R26 is subject to Symmetric dimethylarginine; alternate. S36 carries the phosphoserine; by HIPK2 and CDC2 modification. T39 is modified (phosphothreonine). Residues S44 and S49 each carry the phosphoserine modification. T53 is modified (phosphothreonine; by HIPK2 and CDC2). DNA-binding regions (a.T hook) lie at residues 53–63 (TPKRPRGRPKG) and 78–89 (APGRKPRGRPKK). The interaction with HIPK2 stretch occupies residues 53–77 (TPKRPRGRPKGSKNKGAAKTRKVTT). Positions 55–74 (KRPRGRPKGSKNKGAAKTRK) are enriched in basic residues. Residues R58 and R60 each carry the asymmetric dimethylarginine; by PRMT6; alternate modification. R58 and R60 each carry omega-N-methylarginine; by PRMT6; alternate. Positions 93 to 107 (EEEEGISQESSEEEQ) are enriched in acidic residues. 3 positions are modified to phosphoserine: S99, S102, and S103.

Belongs to the HMGA family. In terms of assembly, interacts with HIPK2. Isoforms HMG-I and HMG-Y can be phosphorylated by HIPK2. Phosphorylation may modulate DNA-binding affinity. Post-translationally, methylation at Arg-58 is mutually exclusive with methylation at Arg-60.

Its subcellular location is the nucleus. It is found in the chromosome. HMG-I/Y bind preferentially to the minor groove of A+T rich regions in double-stranded DNA. It is suggested that these proteins could function in nucleosome phasing and in the 3'-end processing of mRNA transcripts. They are also involved in the transcription regulation of genes containing, or in close proximity to A+T-rich regions. The sequence is that of High mobility group protein HMG-I/HMG-Y (Hmga1) from Mus musculus (Mouse).